We begin with the raw amino-acid sequence, 154 residues long: Urease accessory protein UreE (154 aa).

It belongs to the UreE family.

It localises to the cytoplasm. Its function is as follows. Involved in urease metallocenter assembly. Binds nickel. Probably functions as a nickel donor during metallocenter assembly. In Escherichia coli O157:H7, this protein is Urease accessory protein UreE.